A 456-amino-acid polypeptide reads, in one-letter code: RuvB-like 1 (456 aa).

The segment at 1-20 (MKIEEVKSTTKTQRIASHSH) is disordered. 70–77 (GPPGTGKT) contributes to the ATP binding site.

It belongs to the RuvB family. Forms homohexameric rings. Can form a dodecamer with ruvbl2 made of two stacked hexameric rings. Is a component of the RNA polymerase II holoenzyme complex. Component of the chromatin-remodeling Ino80 complex. Component of some MLL1/MLL complex.

It localises to the nucleus. It is found in the dynein axonemal particle. It carries out the reaction ATP + H2O = ADP + phosphate + H(+). Functionally, has single-stranded DNA-stimulated ATPase and ATP-dependent DNA helicase (3' to 5') activity suggesting a role in nuclear processes such as recombination and transcription. Proposed core component of the chromatin remodeling Ino80 complex which exhibits DNA- and nucleosome-activated ATPase activity and catalyzes ATP-dependent nucleosome sliding. May act as a negative regulator of embryonic heart growth. This is RuvB-like 1 (ruvbl1) from Danio rerio (Zebrafish).